The chain runs to 182 residues: Aralkylamine dehydrogenase light chain (182 aa).

A signal peptide (tat-type signal) is located at residues 1–47 (MRWLDKFGESLSRSVAHKTSRRSVLRSVGKLMVGSAFVLPVLPVARA). 7 cysteine pairs are disulfide-bonded: Cys-75–Cys-140, Cys-81–Cys-113, Cys-88–Cys-171, Cys-90–Cys-138, Cys-91–Cys-135, Cys-98–Cys-129, and Cys-130–Cys-161. A substrate-binding site is contributed by Asp-84. The Tryptophylquinone 6'-substrate hemiaminal intermediate role is filled by Trp-109. At Trp-109 the chain carries Tryptophylquinone. Residues 109–160 (WIGTCHNPHDGKDYLISYHDCCGKTACGRCQCNTQTRERPGYEFFLHNDVNW) constitute a cross-link (tryptophan tryptophylquinone (Trp-Trp)). Asp-128 (proton acceptor) is an active-site residue. 156–158 (NDV) provides a ligand contact to substrate.

Belongs to the aromatic amine dehydrogenase light chain family. In terms of assembly, heterotetramer of two light and two heavy chains. Binds two azurin molecules per heterotetramer. Tryptophan tryptophylquinone residue serves as cofactor. In terms of processing, tryptophan tryptophylquinone (TTQ) is formed by oxidation of the indole ring of a tryptophan to form tryptophylquinone followed by covalent cross-linking with another tryptophan residue. Post-translationally, predicted to be exported by the Tat system. The position of the signal peptide cleavage has been experimentally proven.

The protein localises to the periplasm. It carries out the reaction an aralkylamine + 2 oxidized [azurin] + H2O = an aromatic aldehyde + 2 reduced [azurin] + NH4(+) + 2 H(+). With respect to regulation, irreversibly inhibited by phenylhydrazine, hydroxylamine, semicarbazide, hydrazine and aminoguanidine. Reversibly inhibited by isonicotinic acid hydrazide (isoniazid) and isonicotinic acid 2-isopropyl hydrazide (iproniazid). Its function is as follows. Oxidizes primary aromatic amines and, more slowly, some long-chain aliphatic amines, but not methylamine or ethylamine. Uses azurin as an electron acceptor to transfer electrons from the reduced tryptophylquinone cofactor. The chain is Aralkylamine dehydrogenase light chain from Alcaligenes faecalis.